Here is a 262-residue protein sequence, read N- to C-terminus: Ferric siderophore reductase (262 aa).

Cys244, Cys245, Cys256, and Cys259 together coordinate [2Fe-2S] cluster.

Monomer. The cofactor is [2Fe-2S] cluster.

It localises to the cytoplasm. Its subcellular location is the cell inner membrane. With respect to regulation, displays pH dependent redox properties. SufD is necessary for the stability of FhuF. In terms of biological role, siderophore-iron reductase which is involved in iron removal from the hydroxamate-type siderophores coprogen, ferrichrome and ferrioxamine B after their transport into the cell. Binds both the iron-loaded and the apo forms of ferrichrome. The sequence is that of Ferric siderophore reductase (fhuF) from Escherichia coli (strain K12).